The chain runs to 525 residues: Nucleolar and spindle-associated protein 1-C (525 aa).

4 disordered regions span residues 43-203 (FYPE…KKLH), 250-293 (TPVS…FSAA), 373-398 (TPES…EKAK), and 452-525 (LSRP…VPVQ). The span at 58–69 (SSLTDTDELNSS) shows a compositional bias: polar residues. The span at 82–92 (THRRGRGRKPL) shows a compositional bias: basic residues. Residues 93-102 (KNHDTPKDEF) are compositionally biased toward basic and acidic residues. Polar residues predominate over residues 113–127 (SLASETDNTQHQNCL). Over residues 160–169 (TTEKRQKKAS) the composition is skewed to basic and acidic residues. The span at 270 to 285 (PPTTGASPSRTPTNQR) shows a compositional bias: polar residues. Over residues 476–494 (CGSNNNVSVLKNNFKQPHL) the composition is skewed to polar residues. Positions 495-514 (QTREDRRKQHEQDRKGKRDQ) are enriched in basic and acidic residues.

Belongs to the NUSAP family. In terms of assembly, interacts with DNA, microtubules, ipo7, kpna2 and kpnb1. Microtubule stabilization is inhibited by ipo7 and kpna2, while microtubule bundling is inhibited by kpnb1. Active GTP-bound ran causes dissociation of ipo7 and kpnb1.

It is found in the cytoplasm. Its subcellular location is the nucleus. The protein resides in the cytoskeleton. It localises to the spindle. In terms of biological role, microtubule-associated protein with the capacity to bundle and stabilize microtubules. May associate with chromosomes and promote the organization of meiotic or mitotic spindle microtubules around them. The polypeptide is Nucleolar and spindle-associated protein 1-C (nusap1-c) (Xenopus laevis (African clawed frog)).